The following is a 151-amino-acid chain: Phospholipase A2 inhibitor BjussuMIP (151 aa).

Residues 1–4 (LANG) form the signal peptide. Positions 31-146 (LKYAFLTVHK…CDENLLVVCE (116 aa)) constitute a C-type lectin domain. Intrachain disulfides connect C68–C145 and C123–C137. An N-linked (GlcNAc...) asparagine glycan is attached at N107.

The protein belongs to the alpha-type phospholipase A2 inhibitor family. Oligomer. In terms of tissue distribution, expressed by the liver.

It localises to the secreted. Its function is as follows. Inhibits enzymatic, anticoagulant, edema formation, myotoxicity activities induced by snakes phospholipase A2. Is oligomeric, but it is probable that each of its subunits can bind and inactive a PLA2 molecule. This chain is Phospholipase A2 inhibitor BjussuMIP, found in Bothrops jararacussu (Jararacussu).